We begin with the raw amino-acid sequence, 308 residues long: MFVSRLAASGLLLLSLLALSLDGKPLPQRQPHHIQPMEQKWLAPDAPPLEQKWLAPDAPPLEQKWLAPAAPPLEQKWLAPDAPPMEQKWLAPDAPPMEQKWLAPDAPPMEQKWLAPDAPPMEQKWLAPDAAPLEQKWLAPDAPPMEQKWLAPDAPPMEQKWQPQIPSLMEQRQLSSGGTTALRQELSPRAEAASGPAVVGGGGGGGGGSKAALALPKPPKAKGAAAATSRLMRDLRPDGKQASQKWGRLVDHDHDHHHHHHPGSSVGGGGGGGGGGARRLKGLAKKGVAKGCFGLKLDRIGSMSGLGC.

Residues 1 to 23 form the signal peptide; that stretch reads MFVSRLAASGLLLLSLLALSLDG. The propeptide occupies 24 to 38; it reads KPLPQRQPHHIQPME. Glutamine 39 is modified (pyrrolidone carboxylic acid). Residues 42 to 50 constitute a propeptide that is removed on maturation; sequence LAPDAPPLE. Glutamine 51 carries the post-translational modification Pyrrolidone carboxylic acid. Residues 54–62 constitute a propeptide that is removed on maturation; sequence LAPDAPPLE. At glutamine 63 the chain carries Pyrrolidone carboxylic acid. Residues 66 to 74 constitute a propeptide that is removed on maturation; the sequence is LAPAAPPLE. Glutamine 75 carries the post-translational modification Pyrrolidone carboxylic acid. The propeptide occupies 78 to 86; it reads LAPDAPPME. Glutamine 87 is modified (pyrrolidone carboxylic acid). The propeptide occupies 90–98; that stretch reads LAPDAPPME. Glutamine 99 carries the post-translational modification Pyrrolidone carboxylic acid. The propeptide occupies 102–110; that stretch reads LAPDAPPME. Residue glutamine 111 is modified to Pyrrolidone carboxylic acid. Residues 114 to 122 constitute a propeptide that is removed on maturation; sequence LAPDAPPME. Glutamine 123 carries the pyrrolidone carboxylic acid modification. The propeptide occupies 126-134; it reads LAPDAAPLE. Glutamine 135 carries the pyrrolidone carboxylic acid modification. Residues 138–146 constitute a propeptide that is removed on maturation; it reads LAPDAPPME. A Pyrrolidone carboxylic acid modification is found at glutamine 147. Residues 150 to 158 constitute a propeptide that is removed on maturation; the sequence is LAPDAPPME. Glutamine 159 is modified (pyrrolidone carboxylic acid). Positions 162 to 249 are excised as a propeptide; sequence QPQIPSLMEQ…KQASQKWGRL (88 aa). Positions 172–182 are enriched in polar residues; it reads RQLSSGGTTAL. Disordered stretches follow at residues 172-228 and 252-279; these read RQLS…AAAT and HDHD…GARR. Over residues 198–209 the composition is skewed to gly residues; the sequence is VVGGGGGGGGGS. Low complexity predominate over residues 210 to 227; the sequence is KAALALPKPPKAKGAAAA. Positions 265–277 are enriched in gly residues; the sequence is SVGGGGGGGGGGA. The propeptide occupies 278–286; it reads RRLKGLAKK. A disulfide bridge links cysteine 292 with cysteine 308.

This sequence in the C-terminal section; belongs to the natriuretic peptide family. In the central section; belongs to the pHpG family. Expressed by the venom gland.

The protein localises to the secreted. Its function is as follows. pEKW and poly-His-poly-Gly peptides may serve as metalloproteinase inhibitors during glandular storage. Their inhibition may be instantly disengaged, by dilution or physiochemical change, when venom is injected into tissue of the prey. Has a vasorelaxant activity in rat aortic strips and a diuretic potency in anesthetized rats. May act by activating natriuretic receptors (NPR1 and/or NPR2). The polypeptide is Snake venom metalloprotease inhibitor 02D01 (Echis ocellatus (Ocellated saw-scaled viper)).